We begin with the raw amino-acid sequence, 70 residues long: Conotoxin Cal6.11 (70 aa).

An N-terminal signal peptide occupies residues 1–22 (MKLTCVLIIAVLILTACQFIAA). A propeptide spanning residues 23–43 (DNTEYRKWRRSGTSTGMRLGS) is cleaved from the precursor. 3 disulfides stabilise this stretch: cysteine 46-cysteine 57, cysteine 50-cysteine 62, and cysteine 56-cysteine 69. Residues proline 48 and proline 58 each carry the 4-hydroxyproline modification. A 4-carboxyglutamate mark is found at glutamate 60 and glutamate 67.

Belongs to the conotoxin O1 superfamily. In terms of tissue distribution, expressed by the venom duct.

It is found in the secreted. Probable neurotoxin with unknown target. Possibly targets ion channels. This Californiconus californicus (California cone) protein is Conotoxin Cal6.11.